The following is a 100-amino-acid chain: Urease subunit gamma (100 aa).

It belongs to the urease gamma subunit family. In terms of assembly, heterotrimer of UreA (gamma), UreB (beta) and UreC (alpha) subunits. Three heterotrimers associate to form the active enzyme.

The protein resides in the cytoplasm. It catalyses the reaction urea + 2 H2O + H(+) = hydrogencarbonate + 2 NH4(+). It functions in the pathway nitrogen metabolism; urea degradation; CO(2) and NH(3) from urea (urease route): step 1/1. In Rhodopseudomonas palustris (strain BisB18), this protein is Urease subunit gamma.